A 448-amino-acid polypeptide reads, in one-letter code: Proteases secretion protein PrtE (448 aa).

Topologically, residues 1–30 are cytoplasmic; it reads MTGMDITTQDELNEAAMRDRASRDEERALR. Residues 31 to 50 form a helical membrane-spanning segment; it reads LGWWLVLAGFGGFLLWALLA. Over 51–448 the chain is Periplasmic; the sequence is PLDKGVAVQG…DRMHLALTEE (398 aa).

Belongs to the membrane fusion protein (MFP) (TC 8.A.1) family.

The protein resides in the cell inner membrane. Involved in the secretion of proteases A, B, C and G. The chain is Proteases secretion protein PrtE (prtE) from Dickeya chrysanthemi (Pectobacterium chrysanthemi).